A 611-amino-acid chain; its full sequence is tRNA uridine 5-carboxymethylaminomethyl modification enzyme MnmG (611 aa).

14–19 (GAGHAG) lines the FAD pocket. 274–288 (GPRYCPSIEDKIVKF) lines the NAD(+) pocket.

It belongs to the MnmG family. As to quaternary structure, homodimer. Heterotetramer of two MnmE and two MnmG subunits. The cofactor is FAD.

Its subcellular location is the cytoplasm. In terms of biological role, NAD-binding protein involved in the addition of a carboxymethylaminomethyl (cmnm) group at the wobble position (U34) of certain tRNAs, forming tRNA-cmnm(5)s(2)U34. The polypeptide is tRNA uridine 5-carboxymethylaminomethyl modification enzyme MnmG (Chlamydia felis (strain Fe/C-56) (Chlamydophila felis)).